The primary structure comprises 317 residues: tRNA dimethylallyltransferase (317 aa).

19–26 (GPTASGKS) lines the ATP pocket. Residue 21–26 (TASGKS) participates in substrate binding. The interval 44–47 (DSMQ) is interaction with substrate tRNA.

It belongs to the IPP transferase family. In terms of assembly, monomer. Mg(2+) is required as a cofactor.

The enzyme catalyses adenosine(37) in tRNA + dimethylallyl diphosphate = N(6)-dimethylallyladenosine(37) in tRNA + diphosphate. Functionally, catalyzes the transfer of a dimethylallyl group onto the adenine at position 37 in tRNAs that read codons beginning with uridine, leading to the formation of N6-(dimethylallyl)adenosine (i(6)A). The chain is tRNA dimethylallyltransferase from Methylorubrum extorquens (strain PA1) (Methylobacterium extorquens).